We begin with the raw amino-acid sequence, 631 residues long: Poly(A)-specific ribonuclease PARN (631 aa).

Positions 28 and 30 each coordinate a divalent metal cation. A disordered region spans residues 147-173; that stretch reads EDRRSQSNGASTMSYISPNSSKTPVSI. Over residues 152 to 170 the composition is skewed to polar residues; the sequence is QSNGASTMSYISPNSSKTP. One can recognise an R3H domain in the interval 178–244; it reads KGFIDKVVER…ERYIVISKVD (67 aa). Residues Asp291 and Asp381 each coordinate a divalent metal cation. The tract at residues 568 to 631 is disordered; it reads SPIQEEAASD…SVLFEVPDTW (64 aa).

The protein belongs to the CAF1 family. In terms of assembly, component of a complex at least composed of cpeb1, cpsf1, papd4/gld2, pabpc1/ePAB, parn and sympk. It depends on a divalent metal cation as a cofactor. A 62 kDa form, which is produced by proteolytic cleavage, also exists. In retina, it is constitutively present in most retinal cells, including the photoreceptors.

The protein resides in the cytoplasm. It localises to the nucleus. It carries out the reaction Exonucleolytic cleavage of poly(A) to 5'-AMP.. In terms of biological role, 3'-exoribonuclease that has a preference for poly(A) tails of mRNAs, thereby efficiently degrading poly(A) tails. Exonucleolytic degradation of the poly(A) tail is often the first step in the decay of eukaryotic mRNAs. Required during meiotic maturation to silence certain maternal mRNAs translationally. Does not require an adenosine residue at the 3' end, however, the addition of 25 non-adenylate residues at the 3' terminus, or a 3' terminal phosphate is inhibitory. Involved in dormant mRNAs regulation during oocyte maturation by counteracting polyadenylation mediated by papd4/gld2nt in immature eggs. During maturation it is excluded from the ribonucleoprotein complex, allowing poly(A) elongation by papd4/gld2nt and activation of mRNAs. The protein is Poly(A)-specific ribonuclease PARN (parn) of Xenopus laevis (African clawed frog).